The chain runs to 1812 residues: Putative surface cell antigen sca2 (1812 aa).

Residues 1–17 (MSTCLLTSSFLSTSARA) form the signal peptide. Composition is skewed to polar residues over residues 344–357 (FLNN…STGR) and 371–382 (MSNQSIHNTGTS). Disordered stretches follow at residues 344-382 (FLNN…TGTS), 648-691 (LEQT…QGFS), and 1338-1462 (KQEN…KKDV). Residues 656 to 685 (PNPPPLPLNGGIPNPPPLPLNGSMPPPPPL) show a composition bias toward pro residues. Basic and acidic residues-rich tracts occupy residues 1349-1367 (STKD…EQSD) and 1382-1393 (SKNDKSSDDKKS). Positions 1401 to 1416 (DEDDTGYATDEEELEE) are enriched in acidic residues. A compositionally biased stretch (low complexity) spans 1417–1455 (SNSTTNEELEESNSTTNEELEESNSTTNEELEESNSTTN). An Autotransporter domain is found at 1533-1812 (ETSINRGVWI…QGLIKLKVNL (280 aa)).

The protein resides in the cell outer membrane. The protein is Putative surface cell antigen sca2 (sca2) of Rickettsia sibirica (strain ATCC VR-151 / 246).